Here is a 307-residue protein sequence, read N- to C-terminus: 4-hydroxythreonine-4-phosphate dehydrogenase (307 aa).

2 residues coordinate substrate: His121 and Thr122. Positions 150, 189, and 245 each coordinate a divalent metal cation. Positions 253, 262, and 271 each coordinate substrate.

This sequence belongs to the PdxA family. Homodimer. The cofactor is Zn(2+). Mg(2+) serves as cofactor. It depends on Co(2+) as a cofactor.

It is found in the cytoplasm. The enzyme catalyses 4-(phosphooxy)-L-threonine + NAD(+) = 3-amino-2-oxopropyl phosphate + CO2 + NADH. The protein operates within cofactor biosynthesis; pyridoxine 5'-phosphate biosynthesis; pyridoxine 5'-phosphate from D-erythrose 4-phosphate: step 4/5. Functionally, catalyzes the NAD(P)-dependent oxidation of 4-(phosphooxy)-L-threonine (HTP) into 2-amino-3-oxo-4-(phosphooxy)butyric acid which spontaneously decarboxylates to form 3-amino-2-oxopropyl phosphate (AHAP). The sequence is that of 4-hydroxythreonine-4-phosphate dehydrogenase from Sulfurimonas denitrificans (strain ATCC 33889 / DSM 1251) (Thiomicrospira denitrificans (strain ATCC 33889 / DSM 1251)).